The chain runs to 205 residues: Imidazole glycerol phosphate synthase subunit HisH (205 aa).

The Glutamine amidotransferase type-1 domain occupies 3–205 (KIGLIDYGMG…LLRRWLSNIQ (203 aa)). Cys-81 serves as the catalytic Nucleophile. Catalysis depends on residues His-185 and Glu-187.

In terms of assembly, heterodimer of HisH and HisF.

The protein resides in the cytoplasm. It carries out the reaction 5-[(5-phospho-1-deoxy-D-ribulos-1-ylimino)methylamino]-1-(5-phospho-beta-D-ribosyl)imidazole-4-carboxamide + L-glutamine = D-erythro-1-(imidazol-4-yl)glycerol 3-phosphate + 5-amino-1-(5-phospho-beta-D-ribosyl)imidazole-4-carboxamide + L-glutamate + H(+). It catalyses the reaction L-glutamine + H2O = L-glutamate + NH4(+). It functions in the pathway amino-acid biosynthesis; L-histidine biosynthesis; L-histidine from 5-phospho-alpha-D-ribose 1-diphosphate: step 5/9. IGPS catalyzes the conversion of PRFAR and glutamine to IGP, AICAR and glutamate. The HisH subunit catalyzes the hydrolysis of glutamine to glutamate and ammonia as part of the synthesis of IGP and AICAR. The resulting ammonia molecule is channeled to the active site of HisF. The sequence is that of Imidazole glycerol phosphate synthase subunit HisH from Prochlorococcus marinus (strain MIT 9312).